The sequence spans 356 residues: Protein-glutamate methylesterase/protein-glutamine glutaminase 2 (356 aa).

The 118-residue stretch at 4 to 121 (KVLIVDDSAV…KGFLEESSHE (118 aa)) folds into the Response regulatory domain. Asp-55 is modified (4-aspartylphosphate). The CheB-type methylesterase domain maps to 169–356 (FATTERIIAI…LELIAKAICR (188 aa)). Active-site residues include Ser-181, His-207, and Asp-303.

The protein belongs to the CheB family. Post-translationally, phosphorylated by CheA. Phosphorylation of the N-terminal regulatory domain activates the methylesterase activity.

It is found in the cytoplasm. The enzyme catalyses [protein]-L-glutamate 5-O-methyl ester + H2O = L-glutamyl-[protein] + methanol + H(+). The catalysed reaction is L-glutaminyl-[protein] + H2O = L-glutamyl-[protein] + NH4(+). In terms of biological role, involved in chemotaxis. Part of a chemotaxis signal transduction system that modulates chemotaxis in response to various stimuli. Catalyzes the demethylation of specific methylglutamate residues introduced into the chemoreceptors (methyl-accepting chemotaxis proteins or MCP) by CheR. Also mediates the irreversible deamidation of specific glutamine residues to glutamic acid. In Chromobacterium violaceum (strain ATCC 12472 / DSM 30191 / JCM 1249 / CCUG 213 / NBRC 12614 / NCIMB 9131 / NCTC 9757 / MK), this protein is Protein-glutamate methylesterase/protein-glutamine glutaminase 2.